The sequence spans 180 residues: Endoribonuclease YbeY (180 aa).

Histidine 149, histidine 153, and histidine 159 together coordinate Zn(2+).

Belongs to the endoribonuclease YbeY family. Zn(2+) serves as cofactor.

It localises to the cytoplasm. In terms of biological role, single strand-specific metallo-endoribonuclease involved in late-stage 70S ribosome quality control and in maturation of the 3' terminus of the 16S rRNA. In Prochlorococcus marinus subsp. pastoris (strain CCMP1986 / NIES-2087 / MED4), this protein is Endoribonuclease YbeY.